Consider the following 327-residue polypeptide: Pantothenate kinase (327 aa).

105–112 (GSVAVGKS) contributes to the ATP binding site.

It belongs to the prokaryotic pantothenate kinase family.

Its subcellular location is the cytoplasm. The enzyme catalyses (R)-pantothenate + ATP = (R)-4'-phosphopantothenate + ADP + H(+). The protein operates within cofactor biosynthesis; coenzyme A biosynthesis; CoA from (R)-pantothenate: step 1/5. This chain is Pantothenate kinase, found in Cutibacterium acnes (strain DSM 16379 / KPA171202) (Propionibacterium acnes).